The sequence spans 362 residues: Adenosine kinase (362 aa).

Alanine 2 carries the N-acetylalanine modification. The short motif at 8–16 is the Nuclear localization signal element; it reads PKPKKLKVE. Aspartate 35 is a binding site for adenosine. Serine 49 provides a ligand contact to Mg(2+). Tyrosine 77 carries the phosphotyrosine modification. Mg(2+) is bound by residues aspartate 147 and asparagine 148. Glutamine 306 contributes to the adenosine binding site. Aspartate 317 (proton acceptor) is an active-site residue.

The protein belongs to the carbohydrate kinase PfkB family. As to quaternary structure, monomer. The cofactor is Mg(2+). As to expression, widely expressed. Highest level in placenta, liver, muscle and kidney.

It is found in the nucleus. The protein resides in the cytoplasm. The catalysed reaction is adenosine + ATP = AMP + ADP + H(+). The protein operates within purine metabolism; AMP biosynthesis via salvage pathway; AMP from adenosine: step 1/1. With respect to regulation, activity is inhibited by 5-iodotubercidin and 5'-amino-5'-deoxyadenosine. In terms of biological role, catalyzes the phosphorylation of the purine nucleoside adenosine at the 5' position in an ATP-dependent manner. Serves as a potential regulator of concentrations of extracellular adenosine and intracellular adenine nucleotides. The polypeptide is Adenosine kinase (Homo sapiens (Human)).